The primary structure comprises 220 residues: Redox-sensing transcriptional repressor Rex (220 aa).

A DNA-binding region (H-T-H motif) is located at residues 25–64 (WYLSNVKLLKQKGERYVSSTQISKEINIDASQIAKDLSYV). Residue 99 to 104 (GVGSLG) participates in NAD(+) binding.

It belongs to the transcriptional regulatory Rex family. As to quaternary structure, homodimer.

Its subcellular location is the cytoplasm. Modulates transcription in response to changes in cellular NADH/NAD(+) redox state. This Bacteroides fragilis (strain ATCC 25285 / DSM 2151 / CCUG 4856 / JCM 11019 / LMG 10263 / NCTC 9343 / Onslow / VPI 2553 / EN-2) protein is Redox-sensing transcriptional repressor Rex.